A 311-amino-acid polypeptide reads, in one-letter code: Methionyl-tRNA formyltransferase (311 aa).

Residue 110–113 participates in (6S)-5,6,7,8-tetrahydrofolate binding; it reads SLLP.

This sequence belongs to the Fmt family.

It carries out the reaction L-methionyl-tRNA(fMet) + (6R)-10-formyltetrahydrofolate = N-formyl-L-methionyl-tRNA(fMet) + (6S)-5,6,7,8-tetrahydrofolate + H(+). Attaches a formyl group to the free amino group of methionyl-tRNA(fMet). The formyl group appears to play a dual role in the initiator identity of N-formylmethionyl-tRNA by promoting its recognition by IF2 and preventing the misappropriation of this tRNA by the elongation apparatus. This is Methionyl-tRNA formyltransferase from Streptococcus pyogenes serotype M12 (strain MGAS2096).